We begin with the raw amino-acid sequence, 519 residues long: Cytochrome P450 monooxygenase AtmP (519 aa).

A helical membrane pass occupies residues Ser-21 to Val-41. Cys-457 contacts heme.

The protein belongs to the cytochrome P450 family. It depends on heme as a cofactor.

Its subcellular location is the membrane. It participates in secondary metabolite biosynthesis. Functionally, cytochrome P450 monooxygenase; part of the ATM2 gene cluster that mediates the biosynthesis of aflatrem, a tremorgenic mycotoxin with acute neurotoxic effects. Synthesis of geranylgeranyl diphosphate (GGPP) by AtmG (a GGPP synthase) precedes condensation of GGPP with indole 3-glycerol phosphate, followed by epoxidation and cyclization by AtmM (a FAD-dependent monooxygenase) and AtmC (a prenyltransferase) to produce paspaline. AtmB is also essential for paspaline production, but its exact role has not been identified yet. AtmP, a cytochrome P450 monooxygenase, subsequently converts paspaline to 13-desoxypaxilline via PC-M6 by removal of the C-30 methyl group and oxidation at C-10. AtmQ, a cytochrome P450 monooxygenase, then catalyzes the oxidation of 13-desoxypaxilline, first at C-7 to produce paspalicine and then at C-13 to form paspalinine. Finally, AtmD prenylates paspalinine to form aflatrem. This is Cytochrome P450 monooxygenase AtmP from Aspergillus flavus.